A 908-amino-acid polypeptide reads, in one-letter code: Glutamate receptor ionotropic, kainate 2 (908 aa).

The first 31 residues, 1–31 (MKIISPVLSNLVFSRSIKVLLCLLWIGYSQG), serve as a signal peptide directing secretion. Residues 32–561 (TTHVLRFGGI…VFSFLNPLSP (530 aa)) are Extracellular-facing. N-linked (GlcNAc...) asparagine glycosylation is found at asparagine 67, asparagine 73, asparagine 275, asparagine 378, asparagine 412, asparagine 423, and asparagine 430. The cysteines at positions 96 and 347 are disulfide-linked. Residues proline 516, alanine 518, and arginine 523 each contribute to the L-glutamate site. N-linked (GlcNAc...) asparagine glycosylation occurs at asparagine 546. Residues 562 to 582 (DIWMYILLAYLGVSCVLFVIA) form a helical membrane-spanning segment. At 583–638 (RFSPYEWYNPHPCNPDSDVVENNFTLLNSFWFGVGALMQQGSELMPKALSTRIVGG) the chain is on the cytoplasmic side. The chain crosses the membrane as a helical span at residues 639-659 (IWWFFTLIIISSYTANLAAFL). The Extracellular portion of the chain corresponds to 660–819 (TVERMESPID…KEASALGVQN (160 aa)). Residues alanine 689, threonine 690, and glutamate 738 each contribute to the L-glutamate site. An intrachain disulfide couples cysteine 750 to cysteine 804. N-linked (GlcNAc...) asparagine glycosylation is present at asparagine 751. A helical membrane pass occupies residues 820–840 (IGGIFIVLAAGLVLSVFVAVG). The Cytoplasmic portion of the chain corresponds to 841-908 (EFLYKSKKNA…RRLPGKETMA (68 aa)). 2 positions are modified to phosphoserine; by PKC: serine 846 and serine 868. Lysine 886 is covalently cross-linked (Glycyl lysine isopeptide (Lys-Gly) (interchain with G-Cter in SUMO1)).

It belongs to the glutamate-gated ion channel (TC 1.A.10.1) family. GRIK2 subfamily. As to quaternary structure, homotetramer and heterotetramer with GRIK5. Tetramers may be formed by the dimerization of dimers. Assembles into a kainate-gated homomeric channel that does not bind AMPA. Can form functional heteromeric receptors with GRIK4 and GRIK5. Can form functional heteromeric receptors with GRIK3. Interacts with DLG4. Interacts with NETO2. Interacts (via C-terminus) with KLHL17 (via kelch repeats); the interaction targets GRIK2 for degradation via ubiquitin-proteasome pathway. Post-translationally, sumoylation mediates kainate receptor-mediated endocytosis and regulates synaptic transmission. Sumoylation is enhanced by PIAS3 and desumoylated by SENP1. Ubiquitinated. Ubiquitination regulates the GRIK2 levels at the synapse by leading kainate receptor degradation through proteasome. In terms of processing, phosphorylated by PKC at Ser-868 upon agonist activation, this directly enhance sumoylation. As to expression, highest expression is found in the olfactory lobe, piriform cortex, dentate gyrus, hippocampus, granular cell layer of the cerebellum, and in caudate-putamen.

The protein localises to the cell membrane. Its subcellular location is the postsynaptic cell membrane. It catalyses the reaction Ca(2+)(in) = Ca(2+)(out). The enzyme catalyses Na(+)(in) = Na(+)(out). Its activity is regulated as follows. Cold receptor activity activated by temperatures between 10-19 degrees Celsius. In terms of biological role, ionotropic glutamate receptor that functions as a cation-permeable ligand-gated ion channel, gated by L-glutamate and the glutamatergic agonist kainic acid. L-glutamate acts as an excitatory neurotransmitter at many synapses in the central nervous system. Binding of the excitatory neurotransmitter L-glutamate induces a conformation change, leading to the opening of the cation channel, and thereby converts the chemical signal to an electrical impulse. The receptor then desensitizes rapidly and enters a transient inactive state, characterized by the presence of bound agonist. Modulates cell surface expression of NETO2. In association with GRIK3, involved in presynaptic facilitation of glutamate release at hippocampal mossy fiber synapses. Its function is as follows. Independent of its ionotropic glutamate receptor activity, acts as a thermoreceptor conferring sensitivity to cold temperatures. Functions in dorsal root ganglion neurons. The sequence is that of Glutamate receptor ionotropic, kainate 2 (Grik2) from Rattus norvegicus (Rat).